The following is a 116-amino-acid chain: Large ribosomal subunit protein bL19 (116 aa).

This sequence belongs to the bacterial ribosomal protein bL19 family.

In terms of biological role, this protein is located at the 30S-50S ribosomal subunit interface and may play a role in the structure and function of the aminoacyl-tRNA binding site. This is Large ribosomal subunit protein bL19 from Pseudomonas fluorescens (strain ATCC BAA-477 / NRRL B-23932 / Pf-5).